The chain runs to 149 residues: Small ribosomal subunit protein uS19 (149 aa).

Belongs to the universal ribosomal protein uS19 family.

Its function is as follows. Protein S19 forms a complex with S13 that binds strongly to the 16S ribosomal RNA. The chain is Small ribosomal subunit protein uS19 from Methanopyrus kandleri (strain AV19 / DSM 6324 / JCM 9639 / NBRC 100938).